Consider the following 298-residue polypeptide: Bifunctional protein FolD (298 aa).

NADP(+) is bound by residues 167–169, S192, and V233; that span reads GRS.

This sequence belongs to the tetrahydrofolate dehydrogenase/cyclohydrolase family. As to quaternary structure, homodimer.

The enzyme catalyses (6R)-5,10-methylene-5,6,7,8-tetrahydrofolate + NADP(+) = (6R)-5,10-methenyltetrahydrofolate + NADPH. It carries out the reaction (6R)-5,10-methenyltetrahydrofolate + H2O = (6R)-10-formyltetrahydrofolate + H(+). It participates in one-carbon metabolism; tetrahydrofolate interconversion. Functionally, catalyzes the oxidation of 5,10-methylenetetrahydrofolate to 5,10-methenyltetrahydrofolate and then the hydrolysis of 5,10-methenyltetrahydrofolate to 10-formyltetrahydrofolate. This is Bifunctional protein FolD from Chelativorans sp. (strain BNC1).